We begin with the raw amino-acid sequence, 337 residues long: Leucine-rich repeat-containing protein 39 (337 aa).

9 LRR repeats span residues 84-105 (QLQEWQLHRTGLLKIPEFIGRF), 107-128 (HLIVLDLSRNTISEIPRGIGLL), 130-152 (RLQELILSYNKIKTVPKELSNCT), 153-176 (SLEKLELAVNRDISDLPPELSKLL), 177-198 (KLTHLDLSMNQFTTIPHAVLDM), 200-221 (ALEWLDMGSNSLQQLPDSLDRM), 223-244 (SLHTLWLQRNEITCLPETIKNM), 246-267 (NLGTLVLSNNKLQDIPGCMEEM), and 269-290 (NLRFVNFRDNPLRLEVTLPPSD).

Interacts with MYH7 (via C-terminus). Expressed in heart and skeletal muscle.

The protein localises to the cytoplasm. The protein resides in the myofibril. It is found in the sarcomere. Its subcellular location is the m line. Functionally, component of the sarcomeric M-band which plays a role in myocyte response to biomechanical stress. May regulate expression of other M-band proteins via an SRF-dependent pathway. Important for normal contractile function in heart. This is Leucine-rich repeat-containing protein 39 from Mus musculus (Mouse).